Reading from the N-terminus, the 1375-residue chain is DNA-directed RNA polymerase subunit beta (1375 aa).

This sequence belongs to the RNA polymerase beta chain family. In terms of assembly, the RNAP catalytic core consists of 2 alpha, 1 beta, 1 beta' and 1 omega subunit. When a sigma factor is associated with the core the holoenzyme is formed, which can initiate transcription.

The catalysed reaction is RNA(n) + a ribonucleoside 5'-triphosphate = RNA(n+1) + diphosphate. In terms of biological role, DNA-dependent RNA polymerase catalyzes the transcription of DNA into RNA using the four ribonucleoside triphosphates as substrates. This chain is DNA-directed RNA polymerase subunit beta, found in Coxiella burnetii (strain CbuG_Q212) (Coxiella burnetii (strain Q212)).